Here is a 194-residue protein sequence, read N- to C-terminus: Protein GrpE (194 aa).

The disordered stretch occupies residues 1–44; the sequence is MAEEKQNEELNEQEELNETEAETAEAEQTAAEADAPAEETQTEM. A compositionally biased stretch (acidic residues) spans 9-25; sequence ELNEQEELNETEAETAE.

It belongs to the GrpE family. In terms of assembly, homodimer.

The protein localises to the cytoplasm. In terms of biological role, participates actively in the response to hyperosmotic and heat shock by preventing the aggregation of stress-denatured proteins, in association with DnaK and GrpE. It is the nucleotide exchange factor for DnaK and may function as a thermosensor. Unfolded proteins bind initially to DnaJ; upon interaction with the DnaJ-bound protein, DnaK hydrolyzes its bound ATP, resulting in the formation of a stable complex. GrpE releases ADP from DnaK; ATP binding to DnaK triggers the release of the substrate protein, thus completing the reaction cycle. Several rounds of ATP-dependent interactions between DnaJ, DnaK and GrpE are required for fully efficient folding. The polypeptide is Protein GrpE (Bacillus licheniformis (strain ATCC 14580 / DSM 13 / JCM 2505 / CCUG 7422 / NBRC 12200 / NCIMB 9375 / NCTC 10341 / NRRL NRS-1264 / Gibson 46)).